A 167-amino-acid chain; its full sequence is Early nodulin-like protein 16 (167 aa).

A signal peptide spans 1–24; the sequence is MARVAVLVAGAVLAFLLAATNVTA. In terms of domain architecture, Phytocyanin spans 25–126; sequence KRWTVGDNKF…GMKLAVLVEK (102 aa). N-linked (GlcNAc...) asparagine glycosylation is found at asparagine 40, asparagine 71, asparagine 86, and asparagine 99. A disulfide bond links cysteine 78 and cysteine 114. The GPI-anchor amidated asparagine moiety is linked to residue asparagine 138. The propeptide at 139 to 167 is removed in mature form; the sequence is SARRTFSVSGFAYQFLIPVAVFAAVGTRY.

Belongs to the early nodulin-like (ENODL) family.

The protein localises to the cell membrane. In terms of biological role, may act as a carbohydrate transporter. The polypeptide is Early nodulin-like protein 16 (Arabidopsis thaliana (Mouse-ear cress)).